A 524-amino-acid polypeptide reads, in one-letter code: DNA damage-binding protein CMR1 (524 aa).

The interval 35-79 (EKIIPKPAPPKPKRASAPRAKREPVKRETARPTRQSSRLAGLDAD) is disordered. The segment covering 54–65 (AKREPVKRETAR) has biased composition (basic and acidic residues). 7 WD repeats span residues 184-225 (LVPQ…VKAE), 245-285 (THSR…STEA), 295-332 (LPIS…STAE), 336-376 (LTDQ…GKGD), 385-425 (THDS…KWTA), 447-490 (GRWV…LAQL), and 493-524 (DGIT…CLWM).

The protein belongs to the WD repeat DDB2/WDR76 family.

DNA-binding protein that binds to both single- and double-stranded DNA. Binds preferentially to UV-damaged DNA. May be involved in DNA-metabolic processes. This Chaetomium globosum (strain ATCC 6205 / CBS 148.51 / DSM 1962 / NBRC 6347 / NRRL 1970) (Soil fungus) protein is DNA damage-binding protein CMR1.